A 434-amino-acid chain; its full sequence is UPF0597 protein CLD_2616 (434 aa).

Belongs to the UPF0597 family.

The polypeptide is UPF0597 protein CLD_2616 (Clostridium botulinum (strain Okra / Type B1)).